The primary structure comprises 882 residues: Liprin-beta-2 (882 aa).

Residues 101-303 (AASNETYQER…DKDRRIEELT (203 aa)) are a coiled coil. Phosphoserine occurs at positions 328, 362, and 386. Positions 339–554 (RKWNTTNKSP…SRTRDTKGQK (216 aa)) are disordered. Basic and acidic residues predominate over residues 388 to 399 (EDLRRESGDKCV). 2 stretches are compositionally biased toward polar residues: residues 442 to 457 (PTAS…SQPK) and 481 to 495 (SSAS…QSPV). A phosphoserine mark is found at Ser502 and Ser518. The segment covering 502 to 515 (SPKGIKKFWGKIRR) has biased composition (basic residues). 3 SAM domains span residues 564–628 (WSTE…INAK), 636–699 (LDHI…LHVN), and 724–789 (WSNH…KFNA).

This sequence belongs to the liprin family. Liprin-beta subfamily. Forms homodimers and heterodimers. In terms of tissue distribution, expressed widely. Strong expression in liver, kidney, intestine, heart, lung and testis. Low expression in brain and thymus.

Its function is as follows. May regulate the disassembly of focal adhesions. Did not bind receptor-like tyrosine phosphatases type 2A. The protein is Liprin-beta-2 (Ppfibp2) of Mus musculus (Mouse).